The following is a 234-amino-acid chain: Proteasome subunit alpha (234 aa).

Belongs to the peptidase T1A family. The 20S proteasome core is composed of 14 alpha and 14 beta subunits that assemble into four stacked heptameric rings, resulting in a barrel-shaped structure. The two inner rings, each composed of seven catalytic beta subunits, are sandwiched by two outer rings, each composed of seven alpha subunits. The catalytic chamber with the active sites is on the inside of the barrel. Has a gated structure, the ends of the cylinder being occluded by the N-termini of the alpha-subunits. Is capped at one or both ends by the proteasome regulatory ATPase, PAN.

The protein resides in the cytoplasm. Its activity is regulated as follows. The formation of the proteasomal ATPase PAN-20S proteasome complex, via the docking of the C-termini of PAN into the intersubunit pockets in the alpha-rings, triggers opening of the gate for substrate entry. Interconversion between the open-gate and close-gate conformations leads to a dynamic regulation of the 20S proteasome proteolysis activity. Its function is as follows. Component of the proteasome core, a large protease complex with broad specificity involved in protein degradation. This Picrophilus torridus (strain ATCC 700027 / DSM 9790 / JCM 10055 / NBRC 100828 / KAW 2/3) protein is Proteasome subunit alpha.